We begin with the raw amino-acid sequence, 691 residues long: Elongation factor G (691 aa).

A tr-type G domain is found at 8–283; sequence EDYRNIGIMA…AVVDFLPSPL (276 aa). Residues 17–24, 81–85, and 135–138 each bind GTP; these read AHIDAGKT, DTPGH, and NKMD.

It belongs to the TRAFAC class translation factor GTPase superfamily. Classic translation factor GTPase family. EF-G/EF-2 subfamily.

Its subcellular location is the cytoplasm. Catalyzes the GTP-dependent ribosomal translocation step during translation elongation. During this step, the ribosome changes from the pre-translocational (PRE) to the post-translocational (POST) state as the newly formed A-site-bound peptidyl-tRNA and P-site-bound deacylated tRNA move to the P and E sites, respectively. Catalyzes the coordinated movement of the two tRNA molecules, the mRNA and conformational changes in the ribosome. This Parvibaculum lavamentivorans (strain DS-1 / DSM 13023 / NCIMB 13966) protein is Elongation factor G.